A 467-amino-acid chain; its full sequence is UDP-N-acetylmuramate--L-alanine ligase (467 aa).

ATP is bound at residue 114 to 120; it reads GTHGKTT.

Belongs to the MurCDEF family.

The protein resides in the cytoplasm. The enzyme catalyses UDP-N-acetyl-alpha-D-muramate + L-alanine + ATP = UDP-N-acetyl-alpha-D-muramoyl-L-alanine + ADP + phosphate + H(+). It functions in the pathway cell wall biogenesis; peptidoglycan biosynthesis. Its function is as follows. Cell wall formation. The polypeptide is UDP-N-acetylmuramate--L-alanine ligase (Bradyrhizobium sp. (strain ORS 278)).